The chain runs to 323 residues: Probable cell division protein WhiA (323 aa).

Residues T275–S309 constitute a DNA-binding region (H-T-H motif).

This sequence belongs to the WhiA family.

Functionally, involved in cell division and chromosome segregation. The polypeptide is Probable cell division protein WhiA (Listeria monocytogenes serotype 4b (strain CLIP80459)).